The sequence spans 273 residues: Large ribosomal subunit protein uL2 (273 aa).

The disordered stretch occupies residues 228-273 (VDHPHGGGEGKTSGGRHPVTPWGFPTKGKKTRKNKRTSKFIVKKRK). The segment covering 254–273 (KGKKTRKNKRTSKFIVKKRK) has biased composition (basic residues).

This sequence belongs to the universal ribosomal protein uL2 family. In terms of assembly, part of the 50S ribosomal subunit. Forms a bridge to the 30S subunit in the 70S ribosome.

In terms of biological role, one of the primary rRNA binding proteins. Required for association of the 30S and 50S subunits to form the 70S ribosome, for tRNA binding and peptide bond formation. It has been suggested to have peptidyltransferase activity; this is somewhat controversial. Makes several contacts with the 16S rRNA in the 70S ribosome. The chain is Large ribosomal subunit protein uL2 from Rickettsia africae (strain ESF-5).